A 717-amino-acid chain; its full sequence is MSSEQKPVEDLTEEEAAAALAYLAAEIARNDALYHGNDAPEISDAEYDALKRRNDAIEARFPALVRADSPSRRVGAAPSETFMPVVHARPMLSLDNTFSQEDVQDFVAGVYRFLGRLPDQSIAFTAEPKIDGLSMSIRYENGRMVSAATRGDGTTGENVTANIRTIKEIPQTLPAGAPAVVEIRGEVYMAKSDFLALNAQMEAEGKQSYVNPRNTAAGSLRQLDAKVTASRKLKFFAYAWGEMSDMPADTQFGMVQAFGEWGFPVNPLMKRLNSVADILAHYDEIGLQRPDLDYDIDGVVYKVDSLELQARLGFRSRSPRWATAHKFPAEQALTRLLDIDIQVGRTGALTPVARLEPITVGGVVVTNATLHNADYIKGIGNKGEPIRDGRDIRIGDMVIVQRAGDVIPQIVDVVLEKREASSVAYEFPKTCPVCGSHAVRDINEKTGKVDAVTRCTGGFICRAQATEHLKHFVSRNAYDIEGLGSKQIDFFFESDDPALQVRTAPDIFTLERRQQSSLSKLENIDGFGKVSVSKLYAAINERRDIALHRFIFALGIRHVGETTAKLLARSYGTYEAFEAGMKEAAPLAGDAWNDLNNIEGVGEVVARAVVEFYKEPRNVEVISKLLDEVRPQEAEQPTTSGSPVVGKTVVFTGSLEKFTRDEAKAKAESLGAKVSGSVSKKTDIVVAGPGAGSKLDKAREFNVQVMTEDEWLELIGG.

NAD(+) contacts are provided by residues 44–48 (DAEYD), 93–94 (SL), and Glu127. Catalysis depends on Lys129, which acts as the N6-AMP-lysine intermediate. Residues Arg150, Glu186, Lys302, and Lys326 each contribute to the NAD(+) site. 4 residues coordinate Zn(2+): Cys431, Cys434, Cys455, and Cys461. The BRCT domain maps to 639-717 (TSGSPVVGKT…EDEWLELIGG (79 aa)).

The protein belongs to the NAD-dependent DNA ligase family. LigA subfamily. It depends on Mg(2+) as a cofactor. Mn(2+) serves as cofactor.

The enzyme catalyses NAD(+) + (deoxyribonucleotide)n-3'-hydroxyl + 5'-phospho-(deoxyribonucleotide)m = (deoxyribonucleotide)n+m + AMP + beta-nicotinamide D-nucleotide.. In terms of biological role, DNA ligase that catalyzes the formation of phosphodiester linkages between 5'-phosphoryl and 3'-hydroxyl groups in double-stranded DNA using NAD as a coenzyme and as the energy source for the reaction. It is essential for DNA replication and repair of damaged DNA. In Rhizobium rhizogenes (strain K84 / ATCC BAA-868) (Agrobacterium radiobacter), this protein is DNA ligase.